Here is a 659-residue protein sequence, read N- to C-terminus: Exoribonuclease 2 (659 aa).

The RNB domain maps to 189–531 (RENLTALHFV…NHRLIKAVLA (343 aa)). The S1 motif domain occupies 576–658 (NVEFNAEVQD…ATRSIVGEIL (83 aa)).

The protein belongs to the RNR ribonuclease family. RNase II subfamily.

The protein resides in the cytoplasm. It catalyses the reaction Exonucleolytic cleavage in the 3'- to 5'-direction to yield nucleoside 5'-phosphates.. Its function is as follows. Involved in mRNA degradation. Hydrolyzes single-stranded polyribonucleotides processively in the 3' to 5' direction. This chain is Exoribonuclease 2, found in Haemophilus influenzae (strain 86-028NP).